A 416-amino-acid chain; its full sequence is Keratin, type I cuticular Ha1 (416 aa).

The head stretch occupies residues 1–56; that stretch reads MPYNFCLPSLSCRTSCSSRPCVPPSCHSCTLPGACNIPANVSNCNWFCEGSFNGSE. The region spanning 56 to 367 is the IF rod domain; sequence EKETMQFLND…SLLESEDCNL (312 aa). Residues 57 to 91 are coil 1A; it reads KETMQFLNDRLASYLEKVRQLERDNAELENLIRER. The interval 92–102 is linker 1; the sequence is SQQQEPLLCPS. The coil 1B stretch occupies residues 103–203; that stretch reads YQSYFKTIEE…HEQEVNTLRC (101 aa). The interval 204–219 is linker 12; sequence QLGDRLNVEVDAAPTV. The coil 2 stretch occupies residues 220–363; that stretch reads DLNRVLNETR…NTYRSLLESE (144 aa). Positions 364 to 416 are tail; the sequence is DCNLPSNPCATTNACSKPIGPCLSNPCTPCVPPAPCTPCAPRPRCGPCNSFVR.

Belongs to the intermediate filament family.

The sequence is that of Keratin, type I cuticular Ha1 (KRT31) from Pan troglodytes (Chimpanzee).